Consider the following 59-residue polypeptide: Large ribosomal subunit protein uL30 (59 aa).

This sequence belongs to the universal ribosomal protein uL30 family. As to quaternary structure, part of the 50S ribosomal subunit.

This Shewanella amazonensis (strain ATCC BAA-1098 / SB2B) protein is Large ribosomal subunit protein uL30.